Consider the following 212-residue polypeptide: Large ribosomal subunit protein mL48 (212 aa).

Residues Met1 to Thr28 constitute a mitochondrion transit peptide. Lys199 is subject to N6-succinyllysine.

The protein belongs to the mitochondrion-specific ribosomal protein mL48 family. In terms of assembly, component of the mitochondrial large ribosomal subunit (mt-LSU). Mature mammalian 55S mitochondrial ribosomes consist of a small (28S) and a large (39S) subunit. The 28S small subunit contains a 12S ribosomal RNA (12S mt-rRNA) and 30 different proteins. The 39S large subunit contains a 16S rRNA (16S mt-rRNA), a copy of mitochondrial valine transfer RNA (mt-tRNA(Val)), which plays an integral structural role, and 52 different proteins. mL48 is located at the central protuberance. Interacts with OXA1L.

It localises to the mitochondrion. The protein is Large ribosomal subunit protein mL48 (MRPL48) of Homo sapiens (Human).